The sequence spans 265 residues: Transcriptional activator AggR (265 aa).

The HTH araC/xylS-type domain maps to 164 to 261 (DKVRNTIEKD…GITPKQFLTY (98 aa)). DNA-binding regions (H-T-H motif) lie at residues 181-202 (AIIA…ESEY) and 228-251 (ISQI…VKHF).

In terms of assembly, homodimer.

In terms of biological role, transcriptional activator of aggregative adherence fimbria I expression in enteroaggregative E.coli. This Escherichia coli protein is Transcriptional activator AggR (aggR).